The following is a 116-amino-acid chain: Large ribosomal subunit protein bL20 (116 aa).

The protein belongs to the bacterial ribosomal protein bL20 family.

In terms of biological role, binds directly to 23S ribosomal RNA and is necessary for the in vitro assembly process of the 50S ribosomal subunit. It is not involved in the protein synthesizing functions of that subunit. This chain is Large ribosomal subunit protein bL20, found in Picosynechococcus sp. (strain ATCC 27264 / PCC 7002 / PR-6) (Agmenellum quadruplicatum).